A 312-amino-acid chain; its full sequence is tRNA dimethylallyltransferase (312 aa).

14 to 21 (GPTASGKS) contacts ATP. 16-21 (TASGKS) lines the substrate pocket. Interaction with substrate tRNA stretches follow at residues 39–42 (DSSL) and 163–167 (QRLQR).

Belongs to the IPP transferase family. Monomer. It depends on Mg(2+) as a cofactor.

The catalysed reaction is adenosine(37) in tRNA + dimethylallyl diphosphate = N(6)-dimethylallyladenosine(37) in tRNA + diphosphate. Functionally, catalyzes the transfer of a dimethylallyl group onto the adenine at position 37 in tRNAs that read codons beginning with uridine, leading to the formation of N6-(dimethylallyl)adenosine (i(6)A). The protein is tRNA dimethylallyltransferase of Methylococcus capsulatus (strain ATCC 33009 / NCIMB 11132 / Bath).